The following is a 503-amino-acid chain: Na(+)-translocating NADH-quinone reductase subunit B (503 aa).

Helical transmembrane passes span 55 to 75 (MMLVVIALMPTVFVAIWNSGL), 85 to 105 (PQIMEAFLHISGFTSYFSFVS), 120 to 142 (IFLPLLFISYAVGGTCEVLFAII), 161 to 181 (ILPPTIPYWMAALGIAFGVVI), and 186 to 206 (FGGTGMNILNPALTGRAFLFF). Residue threonine 248 is modified to FMN phosphoryl threonine. Helical transmembrane passes span 361-381 (TSTVACLLGAGLLLLTGIASW), 387-407 (FGLSSLFFAWLFKIISILAAG), 417-437 (FFIPVYRHLFIGGLAFGLVFM), 452-472 (WFYGAFIGFLTILIRLINPAY), and 475-495 (GVMLAILLGNVFAPSFDRIAL).

Belongs to the NqrB/RnfD family. In terms of assembly, composed of six subunits; NqrA, NqrB, NqrC, NqrD, NqrE and NqrF. FMN serves as cofactor.

The protein localises to the cell inner membrane. The enzyme catalyses a ubiquinone + n Na(+)(in) + NADH + H(+) = a ubiquinol + n Na(+)(out) + NAD(+). NQR complex catalyzes the reduction of ubiquinone-1 to ubiquinol by two successive reactions, coupled with the transport of Na(+) ions from the cytoplasm to the periplasm. NqrA to NqrE are probably involved in the second step, the conversion of ubisemiquinone to ubiquinol. The protein is Na(+)-translocating NADH-quinone reductase subunit B of Chlamydia muridarum (strain MoPn / Nigg).